The following is a 341-amino-acid chain: MIELKEVVKEYRTKNKEVLAVDHVNLSIRAGSIYGVIGFSGAGKSTLIRMFNHLEAPTSGEVIIDGDHIGQLSKNGLRAKRQKVSMIFQHFNLLWSRTVLKNIMFPLEIAGVPRRRAKQKALELVELVGLKGREKAYPSELSGGQKQRVGIARALANDPTVLLCDEATSALDPQTTDEILDLLLKIREQQNLTIILITHEMHVIRRICDEVAVMESGKVIEHGPVTQVFENPQHAVTKRFVKEDLNDDFETSLTELEPLEKDAYIVRLVFAGSTTTEPIVSSLSTAYDIKINILEANIKNTKNGTVGFLVLHIPYISSIDFGKFEKELIERQVKMEVLRHG.

Positions 2–241 (IELKEVVKEY…PQHAVTKRFV (240 aa)) constitute an ABC transporter domain. 38–45 (GFSGAGKS) serves as a coordination point for ATP.

Belongs to the ABC transporter superfamily. Methionine importer (TC 3.A.1.24) family. The complex is composed of two ATP-binding proteins (MetN), two transmembrane proteins (MetI) and a solute-binding protein (MetQ).

It is found in the cell membrane. The enzyme catalyses L-methionine(out) + ATP + H2O = L-methionine(in) + ADP + phosphate + H(+). The catalysed reaction is D-methionine(out) + ATP + H2O = D-methionine(in) + ADP + phosphate + H(+). Part of the ABC transporter complex MetNIQ involved in methionine import. Responsible for energy coupling to the transport system. The protein is Methionine import ATP-binding protein MetN 2 of Staphylococcus aureus (strain MRSA252).